We begin with the raw amino-acid sequence, 309 residues long: Lipoyl synthase (309 aa).

Positions 56, 61, 67, 82, 86, 89, and 296 each coordinate [4Fe-4S] cluster. In terms of domain architecture, Radical SAM core spans 68-285; it reads FKRGTATFMI…RVAGLKMGFS (218 aa).

The protein belongs to the radical SAM superfamily. Lipoyl synthase family. The cofactor is [4Fe-4S] cluster.

Its subcellular location is the cytoplasm. It carries out the reaction [[Fe-S] cluster scaffold protein carrying a second [4Fe-4S](2+) cluster] + N(6)-octanoyl-L-lysyl-[protein] + 2 oxidized [2Fe-2S]-[ferredoxin] + 2 S-adenosyl-L-methionine + 4 H(+) = [[Fe-S] cluster scaffold protein] + N(6)-[(R)-dihydrolipoyl]-L-lysyl-[protein] + 4 Fe(3+) + 2 hydrogen sulfide + 2 5'-deoxyadenosine + 2 L-methionine + 2 reduced [2Fe-2S]-[ferredoxin]. Its pathway is protein modification; protein lipoylation via endogenous pathway; protein N(6)-(lipoyl)lysine from octanoyl-[acyl-carrier-protein]: step 2/2. Catalyzes the radical-mediated insertion of two sulfur atoms into the C-6 and C-8 positions of the octanoyl moiety bound to the lipoyl domains of lipoate-dependent enzymes, thereby converting the octanoylated domains into lipoylated derivatives. This is Lipoyl synthase from Syntrophotalea carbinolica (strain DSM 2380 / NBRC 103641 / GraBd1) (Pelobacter carbinolicus).